The sequence spans 41 residues: Protein UL21 homolog (41 aa).

The protein belongs to the herpesviridae UL21 family.

In Equine herpesvirus 4 (strain 1942) (EHV-4), this protein is Protein UL21 homolog.